The primary structure comprises 102 residues: Cell division topological specificity factor (102 aa).

It belongs to the MinE family.

Prevents the cell division inhibition by proteins MinC and MinD at internal division sites while permitting inhibition at polar sites. This ensures cell division at the proper site by restricting the formation of a division septum at the midpoint of the long axis of the cell. This Synechococcus sp. (strain CC9605) protein is Cell division topological specificity factor.